A 509-amino-acid chain; its full sequence is Cobyric acid synthase (509 aa).

The GATase cobBQ-type domain maps to Glu262 to Trp459. The Nucleophile role is filled by Cys343. His451 is an active-site residue.

The protein belongs to the CobB/CobQ family. CobQ subfamily.

It functions in the pathway cofactor biosynthesis; adenosylcobalamin biosynthesis. Its function is as follows. Catalyzes amidations at positions B, D, E, and G on adenosylcobyrinic A,C-diamide. NH(2) groups are provided by glutamine, and one molecule of ATP is hydrogenolyzed for each amidation. In Prochlorococcus marinus (strain MIT 9301), this protein is Cobyric acid synthase.